A 259-amino-acid chain; its full sequence is Ribosome maturation factor RimP (259 aa).

The interval 198 to 259 (SLGLAPEPPP…RGEIDTSEGD (62 aa)) is disordered. The span at 243–253 (LAADKARRGEI) shows a compositional bias: basic and acidic residues.

The protein belongs to the RimP family.

It localises to the cytoplasm. Its function is as follows. Required for maturation of 30S ribosomal subunits. This Rhodopseudomonas palustris (strain TIE-1) protein is Ribosome maturation factor RimP.